The following is a 547-amino-acid chain: Ribosomal lysine N-methyltransferase set10 (547 aa).

An SET domain is found at 17 to 235 (KSVEFIQSRD…KGNQLFNNYG (219 aa)). Y234 lines the S-adenosyl-L-methionine pocket.

It belongs to the class V-like SAM-binding methyltransferase superfamily. RKM1 family.

It localises to the cytoplasm. It is found in the nucleus. In terms of biological role, S-adenosyl-L-methionine-dependent protein-lysine N-methyltransferase that methylates ribosomal protein L23 (rpl23a and rpl23b). The sequence is that of Ribosomal lysine N-methyltransferase set10 (set10) from Schizosaccharomyces pombe (strain 972 / ATCC 24843) (Fission yeast).